The following is a 208-amino-acid chain: Ribosomal RNA large subunit methyltransferase E (208 aa).

Residues G62, W64, D82, D98, and D123 each contribute to the S-adenosyl-L-methionine site. K163 (proton acceptor) is an active-site residue.

Belongs to the class I-like SAM-binding methyltransferase superfamily. RNA methyltransferase RlmE family.

It is found in the cytoplasm. The catalysed reaction is uridine(2552) in 23S rRNA + S-adenosyl-L-methionine = 2'-O-methyluridine(2552) in 23S rRNA + S-adenosyl-L-homocysteine + H(+). In terms of biological role, specifically methylates the uridine in position 2552 of 23S rRNA at the 2'-O position of the ribose in the fully assembled 50S ribosomal subunit. The chain is Ribosomal RNA large subunit methyltransferase E from Mannheimia succiniciproducens (strain KCTC 0769BP / MBEL55E).